Here is a 364-residue protein sequence, read N- to C-terminus: Probable dual-specificity RNA methyltransferase RlmN (364 aa).

Catalysis depends on glutamate 107, which acts as the Proton acceptor. Residues 113–346 (HDYGNSVCVT…ATIRREQGSD (234 aa)) form the Radical SAM core domain. A disulfide bond links cysteine 120 and cysteine 351. Positions 127, 131, and 134 each coordinate [4Fe-4S] cluster. S-adenosyl-L-methionine is bound by residues 177-178 (GE), serine 209, 232-234 (SLH), and asparagine 308. Cysteine 351 serves as the catalytic S-methylcysteine intermediate.

Belongs to the radical SAM superfamily. RlmN family. The cofactor is [4Fe-4S] cluster.

Its subcellular location is the cytoplasm. The enzyme catalyses adenosine(2503) in 23S rRNA + 2 reduced [2Fe-2S]-[ferredoxin] + 2 S-adenosyl-L-methionine = 2-methyladenosine(2503) in 23S rRNA + 5'-deoxyadenosine + L-methionine + 2 oxidized [2Fe-2S]-[ferredoxin] + S-adenosyl-L-homocysteine. The catalysed reaction is adenosine(37) in tRNA + 2 reduced [2Fe-2S]-[ferredoxin] + 2 S-adenosyl-L-methionine = 2-methyladenosine(37) in tRNA + 5'-deoxyadenosine + L-methionine + 2 oxidized [2Fe-2S]-[ferredoxin] + S-adenosyl-L-homocysteine. Specifically methylates position 2 of adenine 2503 in 23S rRNA and position 2 of adenine 37 in tRNAs. Confers resistance to some classes of antibiotics. The polypeptide is Probable dual-specificity RNA methyltransferase RlmN (Staphylococcus haemolyticus (strain JCSC1435)).